Here is a 472-residue protein sequence, read N- to C-terminus: Lycopene beta cyclase, chloroplastic (472 aa).

The transit peptide at 1-25 (MDALLTSPFIPLKKPSHNRKSNTTT) directs the protein to the chloroplast. The disordered stretch occupies residues 1 to 27 (MDALLTSPFIPLKKPSHNRKSNTTTAS). 62–90 (LAVVGGGPAGLAVAKRVSDAGLSVCSIDP) lines the NAD(+) pocket.

Belongs to the lycopene cyclase family. Expressed in flower buds and lips. Detected in roots and leaves.

Its subcellular location is the plastid. The protein resides in the chloroplast. It catalyses the reaction a carotenoid psi-end group = a carotenoid beta-end derivative. The protein operates within carotenoid biosynthesis; beta-carotene biosynthesis. Its pathway is carotenoid biosynthesis; beta-zeacarotene biosynthesis. Functionally, catalyzes the double cyclization reaction which converts lycopene to beta-carotene and neurosporene to beta-zeacarotene. The chain is Lycopene beta cyclase, chloroplastic (LCY-B) from Oncidium hybrid cultivar (Orchid).